A 61-amino-acid chain; its full sequence is Large ribosomal subunit protein bL28 (61 aa).

Residues Met1–Met21 are disordered.

The protein belongs to the bacterial ribosomal protein bL28 family.

This Lactobacillus helveticus (strain DPC 4571) protein is Large ribosomal subunit protein bL28.